The sequence spans 148 residues: Deoxyuridine 5'-triphosphate nucleotidohydrolase (148 aa).

Substrate-binding positions include 67-69 (RSG), Asn-80, 84-86 (LID), and Met-94.

It belongs to the dUTPase family. Mg(2+) serves as cofactor.

It carries out the reaction dUTP + H2O = dUMP + diphosphate + H(+). Its pathway is pyrimidine metabolism; dUMP biosynthesis; dUMP from dCTP (dUTP route): step 2/2. In terms of biological role, this enzyme is involved in nucleotide metabolism: it produces dUMP, the immediate precursor of thymidine nucleotides and it decreases the intracellular concentration of dUTP so that uracil cannot be incorporated into DNA. The chain is Deoxyuridine 5'-triphosphate nucleotidohydrolase from Paraburkholderia phytofirmans (strain DSM 17436 / LMG 22146 / PsJN) (Burkholderia phytofirmans).